Here is a 60-residue protein sequence, read N- to C-terminus: Large ribosomal subunit protein uL30 (60 aa).

This sequence belongs to the universal ribosomal protein uL30 family. As to quaternary structure, part of the 50S ribosomal subunit.

This Streptococcus suis (strain 98HAH33) protein is Large ribosomal subunit protein uL30.